A 441-amino-acid chain; its full sequence is Malate dehydrogenase [NADP], chloroplastic (441 aa).

A chloroplast-targeting transit peptide spans 1–58 (MALTQLNSTCSKPQLHSSSQLSFLSRTRTRTLPRHYHSTFAPLHRTQHARISCSVAPN). C76 and C81 are joined by a disulfide. 105 to 111 (GAAGMIS) contributes to the NADP(+) binding site. The substrate site is built by R186 and R192. N199 contacts NADP(+). Q206 contacts NAD(+). 223–225 (VGN) lines the NADP(+) pocket. Residues N225 and R256 each coordinate substrate. H281 serves as the catalytic Proton acceptor. A disulfide bond links C417 and C429.

Belongs to the LDH/MDH superfamily. MDH type 2 family. As to quaternary structure, homodimer.

The protein localises to the plastid. Its subcellular location is the chloroplast. The enzyme catalyses (S)-malate + NADP(+) = oxaloacetate + NADPH + H(+). Chloroplast NADP-MDH is activated upon illumination. In order to be enzymatically active, disulfide bridges on the protein must be reduced by thioredoxin which receives electrons from ferredoxin and the electron transport system of photosynthesis. In terms of biological role, the chloroplastic, NADP-dependent form is essential for the photosynthesis C4 cycle, which allows plants to circumvent the problem of photorespiration. In C4 plants, NADP-MDH activity acts to convert oxaloacetate to malate in chloroplasts of mesophyll cells for transport to the bundle sheath cells. The polypeptide is Malate dehydrogenase [NADP], chloroplastic (Pisum sativum (Garden pea)).